Reading from the N-terminus, the 232-residue chain is uncharacterized protein (232 aa).

Belongs to the mimivirus R73/L269/L862 family.

This is an uncharacterized protein from Acanthamoeba polyphaga mimivirus (APMV).